A 369-amino-acid polypeptide reads, in one-letter code: Queuine tRNA-ribosyltransferase accessory subunit 2 (369 aa).

The disordered stretch occupies residues 263–282; it reads SSKLTEVEEENGNDSSNDQD. Zn(2+)-binding residues include Cys-308, Cys-310, Cys-313, and His-339.

It belongs to the queuine tRNA-ribosyltransferase family. QTRT2 subfamily. As to quaternary structure, heterodimer of a catalytic subunit and an accessory subunit. Zn(2+) serves as cofactor.

Its subcellular location is the cytoplasm. In terms of biological role, non-catalytic subunit of the queuine tRNA-ribosyltransferase (TGT) that catalyzes the base-exchange of a guanine (G) residue with queuine (Q) at position 34 (anticodon wobble position) in tRNAs with GU(N) anticodons (tRNA-Asp, -Asn, -His and -Tyr), resulting in the hypermodified nucleoside queuosine (7-(((4,5-cis-dihydroxy-2-cyclopenten-1-yl)amino)methyl)-7-deazaguanosine). This chain is Queuine tRNA-ribosyltransferase accessory subunit 2, found in Trichoplax adhaerens (Trichoplax reptans).